The chain runs to 495 residues: Lysine--tRNA ligase (495 aa).

Residues Glu406 and Glu413 each contribute to the Mg(2+) site.

The protein belongs to the class-II aminoacyl-tRNA synthetase family. Homodimer. Mg(2+) is required as a cofactor.

Its subcellular location is the cytoplasm. The enzyme catalyses tRNA(Lys) + L-lysine + ATP = L-lysyl-tRNA(Lys) + AMP + diphosphate. The sequence is that of Lysine--tRNA ligase from Staphylococcus epidermidis (strain ATCC 35984 / DSM 28319 / BCRC 17069 / CCUG 31568 / BM 3577 / RP62A).